A 68-amino-acid chain; its full sequence is Alpha-conotoxin Lp1.4 (68 aa).

Residues 1-21 (MGMRMMSIMFMLVVLATTVVS) form the signal peptide. Positions 22-48 (FTSDRALDAMNAAASKKASRLIALAVR) are excised as a propeptide. 2 disulfide bridges follow: Cys50–Cys56 and Cys51–Cys64. Residues 52–54 (SHP) are ser-Xaa-Pro motif, crucial for potent interaction with nAChR. Residue Asp65 is modified to Aspartic acid 1-amide.

This sequence belongs to the conotoxin A superfamily. Expressed by the venom duct.

The protein resides in the secreted. In terms of biological role, alpha-conotoxins act on postsynaptic membranes, they bind to the nicotinic acetylcholine receptors (nAChR) and thus inhibit them. This toxin inhibits mouse muscle alpha-1-beta-1-gamma-delta (CHRNA1-CHRNB1-CHRNG-CHRND), and weakly rat neuronal alpha-6/alpha-3-beta-2 (CHRNA6/CHRNA3-CHRNB2). This chain is Alpha-conotoxin Lp1.4, found in Conus leopardus (Leopard cone).